A 300-amino-acid polypeptide reads, in one-letter code: Cation-efflux pump FieF (300 aa).

4 helical membrane passes run 12 to 32 (AALS…FAWW), 40 to 60 (LAAL…LFVV), 82 to 102 (AALA…LTGF), and 114 to 134 (PGLG…LVTF). Zn(2+) is bound by residues aspartate 45 and aspartate 49. Histidine 153 and aspartate 157 together coordinate Zn(2+). The helical transmembrane segment at 164–184 (ILIALALSWYGFHRADALFAL) threads the bilayer.

The protein belongs to the cation diffusion facilitator (CDF) transporter (TC 2.A.4) family. FieF subfamily. As to quaternary structure, homodimer.

Its subcellular location is the cell inner membrane. The enzyme catalyses Zn(2+)(in) + H(+)(out) = Zn(2+)(out) + H(+)(in). It carries out the reaction Cd(2+)(in) + H(+)(out) = Cd(2+)(out) + H(+)(in). It catalyses the reaction Fe(2+)(in) + H(+)(out) = Fe(2+)(out) + H(+)(in). Functionally, divalent metal cation transporter which exports Zn(2+), Cd(2+) and possibly Fe(2+). May be involved in zinc and iron detoxification by efflux. The polypeptide is Cation-efflux pump FieF (Yersinia enterocolitica serotype O:8 / biotype 1B (strain NCTC 13174 / 8081)).